The chain runs to 70 residues: Large ribosomal subunit protein bL31 (70 aa).

Cysteine 16, cysteine 18, cysteine 37, and cysteine 40 together coordinate Zn(2+).

Belongs to the bacterial ribosomal protein bL31 family. Type A subfamily. Part of the 50S ribosomal subunit. Requires Zn(2+) as cofactor.

In terms of biological role, binds the 23S rRNA. The chain is Large ribosomal subunit protein bL31 from Erwinia tasmaniensis (strain DSM 17950 / CFBP 7177 / CIP 109463 / NCPPB 4357 / Et1/99).